The sequence spans 1377 residues: DNA-directed RNA polymerase subunit beta' (1377 aa).

Zn(2+)-binding residues include Cys70, Cys72, Cys85, and Cys88. The Mg(2+) site is built by Asp460, Asp462, and Asp464. The Zn(2+) site is built by Cys808, Cys882, Cys889, and Cys892.

Belongs to the RNA polymerase beta' chain family. The RNAP catalytic core consists of 2 alpha, 1 beta, 1 beta' and 1 omega subunit. When a sigma factor is associated with the core the holoenzyme is formed, which can initiate transcription. Requires Mg(2+) as cofactor. It depends on Zn(2+) as a cofactor.

It catalyses the reaction RNA(n) + a ribonucleoside 5'-triphosphate = RNA(n+1) + diphosphate. Its function is as follows. DNA-dependent RNA polymerase catalyzes the transcription of DNA into RNA using the four ribonucleoside triphosphates as substrates. The sequence is that of DNA-directed RNA polymerase subunit beta' from Geotalea daltonii (strain DSM 22248 / JCM 15807 / FRC-32) (Geobacter daltonii).